The chain runs to 120 residues: Large ribosomal subunit protein P3 (120 aa).

The segment at 83–120 (GGGGAAASGGAAAEAPKEEKKEEEKEESDDDMGFSLFD) is disordered.

It belongs to the eukaryotic ribosomal protein P1/P2 family. Post-translationally, phosphorylated.

Functionally, plays an important role in the elongation step of protein synthesis. This Zea mays (Maize) protein is Large ribosomal subunit protein P3 (RPP3A).